The primary structure comprises 474 residues: Aspartyl/glutamyl-tRNA(Asn/Gln) amidotransferase subunit B (474 aa).

Belongs to the GatB/GatE family. GatB subfamily. Heterotrimer of A, B and C subunits.

The catalysed reaction is L-glutamyl-tRNA(Gln) + L-glutamine + ATP + H2O = L-glutaminyl-tRNA(Gln) + L-glutamate + ADP + phosphate + H(+). The enzyme catalyses L-aspartyl-tRNA(Asn) + L-glutamine + ATP + H2O = L-asparaginyl-tRNA(Asn) + L-glutamate + ADP + phosphate + 2 H(+). Allows the formation of correctly charged Asn-tRNA(Asn) or Gln-tRNA(Gln) through the transamidation of misacylated Asp-tRNA(Asn) or Glu-tRNA(Gln) in organisms which lack either or both of asparaginyl-tRNA or glutaminyl-tRNA synthetases. The reaction takes place in the presence of glutamine and ATP through an activated phospho-Asp-tRNA(Asn) or phospho-Glu-tRNA(Gln). The protein is Aspartyl/glutamyl-tRNA(Asn/Gln) amidotransferase subunit B of Wolbachia sp. subsp. Brugia malayi (strain TRS).